A 339-amino-acid polypeptide reads, in one-letter code: Putative pectinesterase 10 (339 aa).

The first 28 residues, 1–28 (MKGVTIHNFCYSYFKVCLLVMSLAYGSA), serve as a signal peptide directing secretion. The N-linked (GlcNAc...) asparagine glycan is linked to N112. T116 contributes to the substrate binding site. D169 (proton donor) is an active-site residue. D190 serves as the catalytic Nucleophile. Substrate-binding residues include R252 and W254. N-linked (GlcNAc...) asparagine glycosylation occurs at N322.

The protein belongs to the pectinesterase family. In terms of tissue distribution, expressed in siliques.

It is found in the secreted. The protein localises to the cell wall. The catalysed reaction is [(1-&gt;4)-alpha-D-galacturonosyl methyl ester](n) + n H2O = [(1-&gt;4)-alpha-D-galacturonosyl](n) + n methanol + n H(+). It participates in glycan metabolism; pectin degradation; 2-dehydro-3-deoxy-D-gluconate from pectin: step 1/5. Functionally, acts in the modification of cell walls via demethylesterification of cell wall pectin. This chain is Putative pectinesterase 10 (PME10), found in Arabidopsis thaliana (Mouse-ear cress).